The following is a 340-amino-acid chain: Extracellular matrix protein-binding protein emp (340 aa).

An N-terminal signal peptide occupies residues 1–26; sequence MKKKLLVLTMSTLFATQIMNSNHAKA.

It localises to the cell surface. In terms of biological role, adhesin that binds to the host cell extracellular matrix proteins fibronectin, fibrinogen, collagen, and vitronectin. The sequence is that of Extracellular matrix protein-binding protein emp (emp) from Staphylococcus aureus (strain USA300).